Here is a 55-residue protein sequence, read N- to C-terminus: ATP synthase F(0) complex subunit 8 (55 aa).

A helical membrane pass occupies residues 7–29; it reads NPWFYIMLMSWLTFSLIIQPELL.

It belongs to the ATPase protein 8 family. Component of the ATP synthase complex composed at least of ATP5F1A/subunit alpha, ATP5F1B/subunit beta, ATP5MC1/subunit c (homooctomer), MT-ATP6/subunit a, MT-ATP8/subunit 8, ATP5ME/subunit e, ATP5MF/subunit f, ATP5MG/subunit g, ATP5MK/subunit k, ATP5MJ/subunit j, ATP5F1C/subunit gamma, ATP5F1D/subunit delta, ATP5F1E/subunit epsilon, ATP5PF/subunit F6, ATP5PB/subunit b, ATP5PD/subunit d, ATP5PO/subunit OSCP. ATP synthase complex consists of a soluble F(1) head domain (subunits alpha(3) and beta(3)) - the catalytic core - and a membrane F(0) domain - the membrane proton channel (subunits c, a, 8, e, f, g, k and j). These two domains are linked by a central stalk (subunits gamma, delta, and epsilon) rotating inside the F1 region and a stationary peripheral stalk (subunits F6, b, d, and OSCP).

It is found in the mitochondrion membrane. Subunit 8, of the mitochondrial membrane ATP synthase complex (F(1)F(0) ATP synthase or Complex V) that produces ATP from ADP in the presence of a proton gradient across the membrane which is generated by electron transport complexes of the respiratory chain. ATP synthase complex consist of a soluble F(1) head domain - the catalytic core - and a membrane F(1) domain - the membrane proton channel. These two domains are linked by a central stalk rotating inside the F(1) region and a stationary peripheral stalk. During catalysis, ATP synthesis in the catalytic domain of F(1) is coupled via a rotary mechanism of the central stalk subunits to proton translocation. In vivo, can only synthesize ATP although its ATP hydrolase activity can be activated artificially in vitro. Part of the complex F(0) domain. The polypeptide is ATP synthase F(0) complex subunit 8 (Musophaga violacea (Violet turaco)).